The primary structure comprises 334 residues: Dolichyl-phosphate beta-glucosyltransferase (334 aa).

The Lumenal segment spans residues 1–12; that stretch reads MRALRFLIENRN. The helical transmembrane segment at 13 to 33 threads the bilayer; it reads TVFFTLLVALVLSLYLLVYLF. The Cytoplasmic segment spans residues 34-334; that stretch reads SHTPRPPYPE…LGIYRDNKKC (301 aa).

The protein belongs to the glycosyltransferase 2 family.

The protein localises to the endoplasmic reticulum membrane. It catalyses the reaction a di-trans,poly-cis-dolichyl phosphate + UDP-alpha-D-glucose = a di-trans,poly-cis-dolichyl beta-D-glucosyl phosphate + UDP. It functions in the pathway protein modification; protein glycosylation. Its function is as follows. Endoplasmic reticulum membrane-bound UDP-glucose:dolichyl-phosphate glucosyltransferase involved in protein N-linked glycosylation. In Saccharomyces cerevisiae (strain ATCC 204508 / S288c) (Baker's yeast), this protein is Dolichyl-phosphate beta-glucosyltransferase.